We begin with the raw amino-acid sequence, 338 residues long: 5-dehydro-2-deoxygluconokinase (338 aa).

It belongs to the carbohydrate kinase PfkB family.

The catalysed reaction is 5-dehydro-2-deoxy-D-gluconate + ATP = 6-phospho-5-dehydro-2-deoxy-D-gluconate + ADP + H(+). Its pathway is polyol metabolism; myo-inositol degradation into acetyl-CoA; acetyl-CoA from myo-inositol: step 5/7. In terms of biological role, catalyzes the phosphorylation of 5-dehydro-2-deoxy-D-gluconate (2-deoxy-5-keto-D-gluconate or DKG) to 6-phospho-5-dehydro-2-deoxy-D-gluconate (DKGP). This chain is 5-dehydro-2-deoxygluconokinase, found in Clostridium perfringens (strain ATCC 13124 / DSM 756 / JCM 1290 / NCIMB 6125 / NCTC 8237 / Type A).